The chain runs to 473 residues: Lactate utilization protein B (473 aa).

2 consecutive 4Fe-4S ferredoxin-type domains span residues 302 to 332 and 351 to 380; these read GSEFRSVLQCIRCAACVNVCPVYRHVGGHSY and YDDYKELPYASSLCGACTEACPVKIPLHDL. Positions 311, 314, 317, 321, 364, 367, and 371 each coordinate [4Fe-4S] cluster.

It belongs to the LutB/YkgF family.

Functionally, is involved in L-lactate degradation and allows cells to grow with lactate as the sole carbon source. Has probably a role as an electron transporter during oxidation of L-lactate. This is Lactate utilization protein B from Bacillus cereus (strain G9842).